The sequence spans 348 residues: Lipooligosaccharide heptosyltransferase 2 (348 aa).

Belongs to the glycosyltransferase 9 family.

It catalyses the reaction an L-alpha-D-Hep-(1-&gt;5)-[alpha-Kdo-(2-&gt;4)]-alpha-Kdo-(2-&gt;6)-lipid A + ADP-L-glycero-beta-D-manno-heptose = an L-alpha-D-Hep-(1-&gt;3)-L-alpha-D-Hep-(1-&gt;5)-[alpha-Kdo-(2-&gt;4)]-alpha-Kdo-(2-&gt;6)-lipid A + ADP + H(+). The protein operates within bacterial outer membrane biogenesis; LOS core biosynthesis. In terms of biological role, glycosyltransferase involved in the biosynthesis of the core oligosaccharide region of lipooligosaccharide (LOS). Catalyzes the addition of a heptose unit to the heptosyl-Kdo2-lipid A module. This Haemophilus ducreyi (strain 35000HP / ATCC 700724) protein is Lipooligosaccharide heptosyltransferase 2.